The primary structure comprises 214 residues: Adenylate kinase (214 aa).

An ATP-binding site is contributed by 10–15 (GAGKGT). The segment at 30 to 59 (STGDMFRDHKARGTEIGKQVQAIMDGGGLV) is NMP. AMP is bound by residues Thr31, Arg36, 57-59 (GLV), 85-88 (GYPR), and Gln92. An LID region spans residues 126 to 163 (GRRSCPRCGAVYHVSQNPPRRAGYCDRDDAELVQREDD). Arg127 contributes to the ATP binding site. Residues Cys130 and Cys133 each coordinate Zn(2+). 136–137 (VY) lines the ATP pocket. Residues Cys150 and Asp153 each contribute to the Zn(2+) site. AMP contacts are provided by Arg160 and Arg171. Gly199 provides a ligand contact to ATP.

This sequence belongs to the adenylate kinase family. Monomer.

The protein resides in the cytoplasm. The enzyme catalyses AMP + ATP = 2 ADP. It functions in the pathway purine metabolism; AMP biosynthesis via salvage pathway; AMP from ADP: step 1/1. In terms of biological role, catalyzes the reversible transfer of the terminal phosphate group between ATP and AMP. Plays an important role in cellular energy homeostasis and in adenine nucleotide metabolism. The chain is Adenylate kinase from Anaeromyxobacter dehalogenans (strain 2CP-C).